Reading from the N-terminus, the 628-residue chain is Chaperone protein DnaK (628 aa).

T197 is modified (phosphothreonine; by autocatalysis). Residues 597-628 (EQMYKGEQGAQGGAADTSKKKSDDDVIDAEIE) form a disordered region.

Belongs to the heat shock protein 70 family.

Its function is as follows. Acts as a chaperone. This Sulfurimonas denitrificans (strain ATCC 33889 / DSM 1251) (Thiomicrospira denitrificans (strain ATCC 33889 / DSM 1251)) protein is Chaperone protein DnaK.